The primary structure comprises 212 residues: Phosphoenolpyruvate guanylyltransferase (212 aa).

Phosphoenolpyruvate is bound by residues Thr-139, Gly-155, and Ser-158.

The protein belongs to the CofC family.

It catalyses the reaction phosphoenolpyruvate + GTP + H(+) = enolpyruvoyl-2-diphospho-5'-guanosine + diphosphate. It functions in the pathway cofactor biosynthesis; coenzyme F420 biosynthesis. Functionally, guanylyltransferase that catalyzes the activation of phosphoenolpyruvate (PEP) as enolpyruvoyl-2-diphospho-5'-guanosine, via the condensation of PEP with GTP. It is involved in the biosynthesis of coenzyme F420, a hydride carrier cofactor. The polypeptide is Phosphoenolpyruvate guanylyltransferase (Streptomyces coelicolor (strain ATCC BAA-471 / A3(2) / M145)).